We begin with the raw amino-acid sequence, 389 residues long: Endo-chitosanase C (389 aa).

Positions 1–22 (MPIKSFASRLALSLAICGTAMG) are cleaved as a signal peptide. Residues 280 to 313 (CSWPGHCAGFKNKGATCSSNDDCSDDLACQNGKC) form an R3-1 repeat. The R3-2 repeat unit spans residues 320–350 (ETCSWEGHCKGATCSSNDDCSDELACISGIC). One copy of the R3-3 repeat lies at 357 to 387 (ETCEWEGHCEGASCSSHDDCDGNLACKNGKC).

It belongs to the glycosyl hydrolase 75 family.

The protein resides in the secreted. The catalysed reaction is Endohydrolysis of beta-(1-&gt;4)-linkages between D-glucosamine residues in a partly acetylated chitosan.. Functionally, chitosanase catalyzing the endo-type cleavage of chitosan, the deacylated form of chitin. Chitosanase may be crucial in the degradation of the deacetylated portion of chitin in the fungal cell wall. Chitoolisaccharides produced by the hydrolysis of partially N-acetylated chitosan are known to have many biological activities, including antibacterial activity, immune-enhancing effects, and elicitor activity. The chain is Endo-chitosanase C (csnC) from Aspergillus oryzae (strain ATCC 42149 / RIB 40) (Yellow koji mold).